Here is a 149-residue protein sequence, read N- to C-terminus: Large ribosomal subunit protein uL15 (149 aa).

Basic residues-rich tracts occupy residues 1–14 (MPTHLSKTRKHRGH) and 21–30 (RVGKHRKHPG). The segment at 1–42 (MPTHLSKTRKHRGHVSAGHGRVGKHRKHPGGRGLAGGQHHHR) is disordered.

It belongs to the universal ribosomal protein uL15 family.

The sequence is that of Large ribosomal subunit protein uL15 from Blumeria hordei (Barley powdery mildew).